Consider the following 111-residue polypeptide: Ribosome-binding factor A (111 aa).

Belongs to the RbfA family. Monomer. Binds 30S ribosomal subunits, but not 50S ribosomal subunits or 70S ribosomes.

Its subcellular location is the cytoplasm. One of several proteins that assist in the late maturation steps of the functional core of the 30S ribosomal subunit. Associates with free 30S ribosomal subunits (but not with 30S subunits that are part of 70S ribosomes or polysomes). Required for efficient processing of 16S rRNA. May interact with the 5'-terminal helix region of 16S rRNA. This Helicobacter acinonychis (strain Sheeba) protein is Ribosome-binding factor A.